The sequence spans 742 residues: G2/M phase-specific E3 ubiquitin-protein ligase (742 aa).

The C2HC pre-PHD-type zinc-finger motif lies at 10 to 50; sequence SPPCVLCGWTDNCPEKYGEKRTYVEYNLTLHNYCLLMSSGI. A PHD-type 1 zinc finger spans residues 78 to 127; sequence LMCNICRKKGASIGCVAPKCKRSYHFPCGLQKECVFQFMEDFRSYCWEHK. The PHD-type 2; degenerate zinc-finger motif lies at 142–192; it reads QCTICLDLVEHLPLYSVLRSPCCKNTWFHRECLQYQALSAGIFFFRCAVCN. The PHD-type 3 zinc-finger motif lies at 236 to 285; that stretch reads RCLCKNGRDYNKPDSKWEIKRCQSCGSRGTHLACSSIKSWEQNWECVECR. Positions 417-742 constitute an HECT domain; sequence KGFRQRNFRP…IRSTLRGERE (326 aa).

It is found in the nucleus. It localises to the nucleolus. The protein resides in the cytoplasm. It carries out the reaction S-ubiquitinyl-[E2 ubiquitin-conjugating enzyme]-L-cysteine + [acceptor protein]-L-lysine = [E2 ubiquitin-conjugating enzyme]-L-cysteine + N(6)-ubiquitinyl-[acceptor protein]-L-lysine.. It participates in protein modification; protein ubiquitination. E3 ubiquitin-protein ligase which accepts ubiquitin from an E2 ubiquitin-conjugating enzyme in the form of a thioester and then directly transfers the ubiquitin to targeted substrates. Essential in early embryonic development to prevent apoptotic death. This chain is G2/M phase-specific E3 ubiquitin-protein ligase (G2E3), found in Gallus gallus (Chicken).